Consider the following 487-residue polypeptide: Transmembrane protein 161B (487 aa).

N34 carries an N-linked (GlcNAc...) asparagine glycan. A helical membrane pass occupies residues L107–F127. N135 carries N-linked (GlcNAc...) asparagine glycosylation. Transmembrane regions (helical) follow at residues I136–T156 and S169–T189. N203 is a glycosylation site (N-linked (GlcNAc...) asparagine). 5 helical membrane-spanning segments follow: residues F228–L248, I265–V285, L305–L325, V367–H387, and L459–F479.

This sequence belongs to the TMEM161 family.

It localises to the cell membrane. In terms of biological role, essential for maintaining normal cardiac rhythm in the developing heart and for neonatal survival. Inhibits potassium and calcium currents in the cardiomyocytes, this assists in timely action potential repolarization and thereby maintains normal cardiac rhythm. The protein is Transmembrane protein 161B (Tmem161b) of Mus musculus (Mouse).